The chain runs to 129 residues: UPF0146 protein VNG_2609C (129 aa).

It belongs to the UPF0146 family.

This is UPF0146 protein VNG_2609C from Halobacterium salinarum (strain ATCC 700922 / JCM 11081 / NRC-1) (Halobacterium halobium).